Here is a 276-residue protein sequence, read N- to C-terminus: NAD kinase (276 aa).

Residue Asp61 is the Proton acceptor of the active site. NAD(+)-binding positions include 61–62 (DG), 134–135 (ND), Arg145, Lys162, Asp164, Val172, 175–180 (TAYSFS), and Gln234.

The protein belongs to the NAD kinase family. It depends on a divalent metal cation as a cofactor.

It localises to the cytoplasm. The catalysed reaction is NAD(+) + ATP = ADP + NADP(+) + H(+). Involved in the regulation of the intracellular balance of NAD and NADP, and is a key enzyme in the biosynthesis of NADP. Catalyzes specifically the phosphorylation on 2'-hydroxyl of the adenosine moiety of NAD to yield NADP. This Clostridium perfringens (strain ATCC 13124 / DSM 756 / JCM 1290 / NCIMB 6125 / NCTC 8237 / Type A) protein is NAD kinase.